We begin with the raw amino-acid sequence, 253 residues long: MKILICNDDGYQAPGLVALYDALKDVAEVEVVAPEQNNSAKSNALTLHTPMYVCRASNGFRYINGTPADCVHIALTGLLGYRPDLVLAGINNGANMGDDTIYSGTVGAAMEGYLFGIPAIAFSQVEKNWSHLASAARKARDLVLQMSQQDLIGSSPWLLNVNIPNLTFDEIAHVKLCRLGRRHAAEAVITQVSPRGDTMYWIGAAGPAKDEAEGTDFHATSLGHIAMTPLKVDLTDHDSLGYWAQTAAKLTLA.

A divalent metal cation is bound by residues D8, D9, S39, and N91.

Belongs to the SurE nucleotidase family. A divalent metal cation serves as cofactor.

The protein localises to the cytoplasm. It catalyses the reaction a ribonucleoside 5'-phosphate + H2O = a ribonucleoside + phosphate. In terms of biological role, nucleotidase that shows phosphatase activity on nucleoside 5'-monophosphates. This Albidiferax ferrireducens (strain ATCC BAA-621 / DSM 15236 / T118) (Rhodoferax ferrireducens) protein is 5'-nucleotidase SurE.